The following is a 690-amino-acid chain: Polyphosphate kinase (690 aa).

Asn-45 serves as a coordination point for ATP. Arg-375 and Arg-405 together coordinate Mg(2+). The Phosphohistidine intermediate role is filled by His-435. Tyr-468, Arg-564, and His-592 together coordinate ATP.

This sequence belongs to the polyphosphate kinase 1 (PPK1) family. The cofactor is Mg(2+). Post-translationally, an intermediate of this reaction is the autophosphorylated ppk in which a phosphate is covalently linked to a histidine residue through a N-P bond.

It catalyses the reaction [phosphate](n) + ATP = [phosphate](n+1) + ADP. In terms of biological role, catalyzes the reversible transfer of the terminal phosphate of ATP to form a long-chain polyphosphate (polyP). The polypeptide is Polyphosphate kinase (Pseudomonas aeruginosa (strain ATCC 15692 / DSM 22644 / CIP 104116 / JCM 14847 / LMG 12228 / 1C / PRS 101 / PAO1)).